A 543-amino-acid chain; its full sequence is Chaperonin GroEL (543 aa).

ATP is bound by residues 29–32 (TLGP), 86–90 (DGTTT), Gly413, 476–478 (NAA), and Asp492.

This sequence belongs to the chaperonin (HSP60) family. As to quaternary structure, forms a cylinder of 14 subunits composed of two heptameric rings stacked back-to-back. Interacts with the co-chaperonin GroES.

The protein resides in the cytoplasm. The enzyme catalyses ATP + H2O + a folded polypeptide = ADP + phosphate + an unfolded polypeptide.. Together with its co-chaperonin GroES, plays an essential role in assisting protein folding. The GroEL-GroES system forms a nano-cage that allows encapsulation of the non-native substrate proteins and provides a physical environment optimized to promote and accelerate protein folding. This chain is Chaperonin GroEL, found in Streptococcus pyogenes serotype M18 (strain MGAS8232).